We begin with the raw amino-acid sequence, 328 residues long: Biotin synthase (328 aa).

The Radical SAM core domain maps to 48–275 (NRIQLSKLLN…KSHVRLTAGR (228 aa)). Positions 63, 67, and 70 each coordinate [4Fe-4S] cluster. Positions 107, 138, 198, and 270 each coordinate [2Fe-2S] cluster.

Belongs to the radical SAM superfamily. Biotin synthase family. In terms of assembly, homodimer. Requires [4Fe-4S] cluster as cofactor. [2Fe-2S] cluster is required as a cofactor.

It catalyses the reaction (4R,5S)-dethiobiotin + (sulfur carrier)-SH + 2 reduced [2Fe-2S]-[ferredoxin] + 2 S-adenosyl-L-methionine = (sulfur carrier)-H + biotin + 2 5'-deoxyadenosine + 2 L-methionine + 2 oxidized [2Fe-2S]-[ferredoxin]. It participates in cofactor biosynthesis; biotin biosynthesis; biotin from 7,8-diaminononanoate: step 2/2. In terms of biological role, catalyzes the conversion of dethiobiotin (DTB) to biotin by the insertion of a sulfur atom into dethiobiotin via a radical-based mechanism. The polypeptide is Biotin synthase (Brucella abortus (strain S19)).